Consider the following 91-residue polypeptide: Small ribosomal subunit protein uS19 (91 aa).

This sequence belongs to the universal ribosomal protein uS19 family.

Its function is as follows. Protein S19 forms a complex with S13 that binds strongly to the 16S ribosomal RNA. The chain is Small ribosomal subunit protein uS19 from Psychrobacter sp. (strain PRwf-1).